Here is a 909-residue protein sequence, read N- to C-terminus: ABC transporter B family member 1 (909 aa).

Residues 1 to 36 (MTKKNFNDEENESLLETYNKQQQKQSISTTNRSDQK) form a disordered region. The span at 14–36 (LLETYNKQQQKQSISTTNRSDQK) shows a compositional bias: polar residues. A helical membrane pass occupies residues 85 to 105 (LFIQIVSLVILAGYLISINAL). Residues 125-134 (TDSGSVSPTS) show a composition bias toward low complexity. Residues 125 to 147 (TDSGSVSPTSTPSPTPTPTPSPT) form a disordered region. The segment covering 135-145 (TPSPTPTPTPS) has biased composition (pro residues). 8 helical membrane passes run 182 to 202 (FSTF…LLLI), 206 to 226 (SFIY…YNVI), 275 to 295 (IIIV…VLHI), 347 to 367 (LPII…SLAM), 392 to 412 (LALV…SWLF), 480 to 500 (VILL…IVPV), 572 to 592 (GVFS…IVYV), and 607 to 627 (LTSF…ISSL). The ABC transmembrane type-1 domain maps to 350–633 (ILAAMVALVF…ISSLMTDFLK (284 aa)). In terms of domain architecture, ABC transporter spans 666–902 (IELKDVEFSY…TDGIYHNLVK (237 aa)). Residue 701-708 (GPSGGGKS) coordinates ATP.

This sequence belongs to the ABC transporter superfamily. ABCB family.

The protein localises to the membrane. This chain is ABC transporter B family member 1 (abcB1), found in Dictyostelium discoideum (Social amoeba).